Consider the following 403-residue polypeptide: Argininosuccinate synthase (403 aa).

ATP-binding positions include 13–21 (AYSGGLDTS) and Ala40. Positions 92 and 97 each coordinate L-citrulline. Gly122 serves as a coordination point for ATP. Residues Thr124, Asn128, and Asp129 each contribute to the L-aspartate site. Position 128 (Asn128) interacts with L-citrulline. Arg132, Ser181, Ser190, Glu266, and Tyr278 together coordinate L-citrulline.

The protein belongs to the argininosuccinate synthase family. Type 1 subfamily. Homotetramer.

The protein localises to the cytoplasm. The enzyme catalyses L-citrulline + L-aspartate + ATP = 2-(N(omega)-L-arginino)succinate + AMP + diphosphate + H(+). The protein operates within amino-acid biosynthesis; L-arginine biosynthesis; L-arginine from L-ornithine and carbamoyl phosphate: step 2/3. This Aliivibrio fischeri (strain ATCC 700601 / ES114) (Vibrio fischeri) protein is Argininosuccinate synthase.